Reading from the N-terminus, the 332-residue chain is L-lactate dehydrogenase A chain (332 aa).

NAD(+)-binding positions include 29–57 (GMVG…MEDK) and Arg99. Substrate is bound by residues Arg106, Asn138, and Arg169. Asn138 is an NAD(+) binding site. Residue His193 is the Proton acceptor of the active site. Thr248 lines the substrate pocket.

This sequence belongs to the LDH/MDH superfamily. LDH family. As to quaternary structure, homotetramer.

It is found in the cytoplasm. It catalyses the reaction (S)-lactate + NAD(+) = pyruvate + NADH + H(+). Its pathway is fermentation; pyruvate fermentation to lactate; (S)-lactate from pyruvate: step 1/1. Its function is as follows. Interconverts simultaneously and stereospecifically pyruvate and lactate with concomitant interconversion of NADH and NAD(+). The polypeptide is L-lactate dehydrogenase A chain (ldha) (Rhinogobiops nicholsii (Blackeye goby)).